We begin with the raw amino-acid sequence, 962 residues long: Protease 3 (962 aa).

The signal sequence occupies residues 1–23 (MPRSIWFKALLLFVALWAPLSQA). H88 contributes to the Zn(2+) binding site. E91 serves as the catalytic Proton acceptor. Zn(2+) contacts are provided by H92 and E169.

The protein belongs to the peptidase M16 family. As to quaternary structure, monomer. Zn(2+) is required as a cofactor.

Its subcellular location is the periplasm. The enzyme catalyses Preferential cleavage of 16-Tyr-|-Leu-17 and 25-Phe-|-Tyr-26 bonds of oxidized insulin B chain. Also acts on other substrates of Mw less than 7 kDa such as insulin and glucagon.. Functionally, endopeptidase that degrades small peptides of less than 7 kDa, such as glucagon and insulin. The polypeptide is Protease 3 (ptrA) (Escherichia coli O6:H1 (strain CFT073 / ATCC 700928 / UPEC)).